The sequence spans 420 residues: MILIKNVFVNGKRQDILIEGNKIKKIGEVKKEEIENAEIIDGKNKIAIPGLINTHTHIPMTLFRGVADDLPLMEWLNNYIWPMEAKLNEEIVYWGTLLGCIEMIRSGTTTFNDMYFFLEGIAKAVDESGMRAVLAYGMIDLFDEERRERELKNAEKYINYINSLNNSRIMPALGPHAPYTCSKELLMEVNNLAKKYNVPIHIHLNETLDEIKMVKEKTGMEPFIYLNSFGFFDDVRAIAAHCVHLTDEEIKIMKQKNINVSHNPISNLKLASGVAPIPKLLAEGINVTLGTDGCGSNNNLNLFEEIKVSAILHKGVNLNPTVVKAEEAFNFATKNGAKALNIKAGEIREGYLADIVLINLDKPYLYPKENIMSHLVYAFNGFVDDVIIDGNIVMRDGEILTVDEEKVYEKAEEMYEILRS.

The Zn(2+) site is built by histidine 55 and histidine 57. Residues glutamate 84 and histidine 176 each contribute to the substrate site. Histidine 203 provides a ligand contact to Zn(2+). The substrate site is built by glutamate 206 and aspartate 292. Aspartate 292 is a binding site for Zn(2+).

This sequence belongs to the metallo-dependent hydrolases superfamily. MTA/SAH deaminase family. In terms of assembly, homotetramer. Zn(2+) serves as cofactor.

The catalysed reaction is 5'-deoxyadenosine + H2O + H(+) = 5'-deoxyinosine + NH4(+). It carries out the reaction S-adenosyl-L-homocysteine + H2O + H(+) = S-inosyl-L-homocysteine + NH4(+). It catalyses the reaction S-methyl-5'-thioadenosine + H2O + H(+) = S-methyl-5'-thioinosine + NH4(+). The enzyme catalyses adenosine + H2O + H(+) = inosine + NH4(+). Its pathway is amino-acid biosynthesis; S-adenosyl-L-methionine biosynthesis. In terms of biological role, catalyzes the deamination of three SAM-derived enzymatic products, namely 5'-deoxyadenosine, S-adenosyl-L-homocysteine, and 5'-methylthioadenosine, to produce the inosine analogs. Can also deaminate adenosine. The preferred substrate for this enzyme is 5'-deoxyadenosine, but all these substrates are efficiently deaminated. Likely functions in a S-adenosyl-L-methionine (SAM) recycling pathway from S-adenosyl-L-homocysteine (SAH) produced from SAM-dependent methylation reactions. May also be involved in the recycling of 5'-deoxyadenosine, whereupon the 5'-deoxyribose moiety of 5'-deoxyinosine is further metabolized to deoxyhexoses used for the biosynthesis of aromatic amino acids in methanogens. This chain is 5'-deoxyadenosine deaminase, found in Methanocaldococcus jannaschii (strain ATCC 43067 / DSM 2661 / JAL-1 / JCM 10045 / NBRC 100440) (Methanococcus jannaschii).